We begin with the raw amino-acid sequence, 352 residues long: Holliday junction branch migration complex subunit RuvB (352 aa).

A large ATPase domain (RuvB-L) region spans residues 1 to 182; it reads MRIELLNTPP…FGINSRFDYY (182 aa). Residues I21, R22, G63, K66, T67, T68, 129–131, R172, Y182, and R219 each bind ATP; that span reads EDF. T67 provides a ligand contact to Mg(2+). The small ATPAse domain (RuvB-S) stretch occupies residues 183 to 253; the sequence is EPELLTRIII…IAMKTLECLE (71 aa). Residues 256–352 form a head domain (RuvB-H) region; that stretch reads EEGLDEMDKK…LPLFDESEAD (97 aa). Residues R292, R311, and R316 each contribute to the DNA site.

This sequence belongs to the RuvB family. As to quaternary structure, homohexamer. Forms an RuvA(8)-RuvB(12)-Holliday junction (HJ) complex. HJ DNA is sandwiched between 2 RuvA tetramers; dsDNA enters through RuvA and exits via RuvB. An RuvB hexamer assembles on each DNA strand where it exits the tetramer. Each RuvB hexamer is contacted by two RuvA subunits (via domain III) on 2 adjacent RuvB subunits; this complex drives branch migration. In the full resolvosome a probable DNA-RuvA(4)-RuvB(12)-RuvC(2) complex forms which resolves the HJ.

It is found in the cytoplasm. The catalysed reaction is ATP + H2O = ADP + phosphate + H(+). The RuvA-RuvB-RuvC complex processes Holliday junction (HJ) DNA during genetic recombination and DNA repair, while the RuvA-RuvB complex plays an important role in the rescue of blocked DNA replication forks via replication fork reversal (RFR). RuvA specifically binds to HJ cruciform DNA, conferring on it an open structure. The RuvB hexamer acts as an ATP-dependent pump, pulling dsDNA into and through the RuvAB complex. RuvB forms 2 homohexamers on either side of HJ DNA bound by 1 or 2 RuvA tetramers; 4 subunits per hexamer contact DNA at a time. Coordinated motions by a converter formed by DNA-disengaged RuvB subunits stimulates ATP hydrolysis and nucleotide exchange. Immobilization of the converter enables RuvB to convert the ATP-contained energy into a lever motion, pulling 2 nucleotides of DNA out of the RuvA tetramer per ATP hydrolyzed, thus driving DNA branch migration. The RuvB motors rotate together with the DNA substrate, which together with the progressing nucleotide cycle form the mechanistic basis for DNA recombination by continuous HJ branch migration. Branch migration allows RuvC to scan DNA until it finds its consensus sequence, where it cleaves and resolves cruciform DNA. The polypeptide is Holliday junction branch migration complex subunit RuvB (Chlorobium chlorochromatii (strain CaD3)).